We begin with the raw amino-acid sequence, 105 residues long: Small ribosomal subunit protein eS10B (105 aa).

It belongs to the eukaryotic ribosomal protein eS10 family. As to quaternary structure, component of the small ribosomal subunit (SSU). Mature yeast ribosomes consist of a small (40S) and a large (60S) subunit. The 40S small subunit contains 1 molecule of ribosomal RNA (18S rRNA) and 33 different proteins (encoded by 57 genes). The large 60S subunit contains 3 rRNA molecules (25S, 5.8S and 5S rRNA) and 46 different proteins (encoded by 81 genes). eS10 interacts with GCN1 (via middle region); this interaction is direct and promotes GCN2 kinase activity. The N-terminus is not modified.

The protein resides in the cytoplasm. Functionally, component of the ribosome, a large ribonucleoprotein complex responsible for the synthesis of proteins in the cell. The small ribosomal subunit (SSU) binds messenger RNAs (mRNAs) and translates the encoded message by selecting cognate aminoacyl-transfer RNA (tRNA) molecules. The large subunit (LSU) contains the ribosomal catalytic site termed the peptidyl transferase center (PTC), which catalyzes the formation of peptide bonds, thereby polymerizing the amino acids delivered by tRNAs into a polypeptide chain. The nascent polypeptides leave the ribosome through a tunnel in the LSU and interact with protein factors that function in enzymatic processing, targeting, and the membrane insertion of nascent chains at the exit of the ribosomal tunnel. eS10 plays a role as a positive regulator of the GCN2 kinase activity by stimulating GCN1-mediated GCN2 activation. The chain is Small ribosomal subunit protein eS10B from Saccharomyces cerevisiae (strain ATCC 204508 / S288c) (Baker's yeast).